Reading from the N-terminus, the 718-residue chain is DNA ligase (718 aa).

NAD(+) contacts are provided by residues 44–48, 93–94, and E127; these read DADYD and SL. The active-site N6-AMP-lysine intermediate is K129. NAD(+)-binding residues include R150, E186, K302, and K326. 4 residues coordinate Zn(2+): C432, C435, C456, and C462. The region spanning 640–718 is the BRCT domain; that stretch reads TAGSPVAGKT…EDEWLALISG (79 aa).

Belongs to the NAD-dependent DNA ligase family. LigA subfamily. Mg(2+) serves as cofactor. Mn(2+) is required as a cofactor.

It carries out the reaction NAD(+) + (deoxyribonucleotide)n-3'-hydroxyl + 5'-phospho-(deoxyribonucleotide)m = (deoxyribonucleotide)n+m + AMP + beta-nicotinamide D-nucleotide.. In terms of biological role, DNA ligase that catalyzes the formation of phosphodiester linkages between 5'-phosphoryl and 3'-hydroxyl groups in double-stranded DNA using NAD as a coenzyme and as the energy source for the reaction. It is essential for DNA replication and repair of damaged DNA. This Rhizobium etli (strain CIAT 652) protein is DNA ligase.